The primary structure comprises 721 residues: Polyribonucleotide nucleotidyltransferase (721 aa).

Mg(2+) is bound by residues Asp495 and Asp501. Residues 562–621 (PRITTIKIRPERIKDIIGPGGKTIKDITARTGTSINIEDDGSVSIASPNQDKVEEAIKMI) enclose the KH domain. An S1 motif domain is found at 631 to 699 (GRIYMGTVRK…RSGKIRLSRK (69 aa)). The tract at residues 699–721 (KEALADSAKKSEGTEPPKGEPAK) is disordered.

Belongs to the polyribonucleotide nucleotidyltransferase family. Requires Mg(2+) as cofactor.

Its subcellular location is the cytoplasm. It catalyses the reaction RNA(n+1) + phosphate = RNA(n) + a ribonucleoside 5'-diphosphate. Involved in mRNA degradation. Catalyzes the phosphorolysis of single-stranded polyribonucleotides processively in the 3'- to 5'-direction. The polypeptide is Polyribonucleotide nucleotidyltransferase (Anaeromyxobacter dehalogenans (strain 2CP-C)).